We begin with the raw amino-acid sequence, 356 residues long: tRNA N6-adenosine threonylcarbamoyltransferase (356 aa).

Fe cation-binding residues include histidine 116 and histidine 120. Residues 139–143 (IVSGG), aspartate 174, glycine 187, aspartate 191, and asparagine 281 each bind substrate. Aspartate 309 contacts Fe cation.

Belongs to the KAE1 / TsaD family. Fe(2+) is required as a cofactor.

It is found in the cytoplasm. The enzyme catalyses L-threonylcarbamoyladenylate + adenosine(37) in tRNA = N(6)-L-threonylcarbamoyladenosine(37) in tRNA + AMP + H(+). Required for the formation of a threonylcarbamoyl group on adenosine at position 37 (t(6)A37) in tRNAs that read codons beginning with adenine. Is involved in the transfer of the threonylcarbamoyl moiety of threonylcarbamoyl-AMP (TC-AMP) to the N6 group of A37, together with TsaE and TsaB. TsaD likely plays a direct catalytic role in this reaction. The polypeptide is tRNA N6-adenosine threonylcarbamoyltransferase (Frankia casuarinae (strain DSM 45818 / CECT 9043 / HFP020203 / CcI3)).